A 766-amino-acid polypeptide reads, in one-letter code: MGRRRLLVWLCAVAALLSGAQARGTPLLARPAPPGASRYSLYTTGWRPRLRPGPHKALCAYVVHRNVTCILQEGAESYVKAEYRQCRWGPKCPGTVTYRTVLRPKYKVGYKTVTDLAWRCCPGFTGKRCPEHLTDHGAASPQLEPEPQIPSGQLDPGPRPPSYSRAAPSPHGRKGPGLFGERLERLEGDVQRLAQTYGTLSGLVASHEDPNRMTGGPRAPAVPVGFGVIPEGLVGPGDRARGPLTPPLDEILSKVTEVSNTLQTKVQLLDKVHGLALGHEAHLQRLREAPPSPLTSLALLEEYVDRRLHRLWGSLLDGFEQKLQGVQSECDLRVQEVRRQCEEGQAASRRLHQSLDGRELALRQELSQLGSQLQGLSVSGRGSCCGQLALINARMDGLERALQAVTETQRGPGAPAGDELTRLSAAMLEGGVDGLLEGLETLNGTEGGARGCCLRLDMGGWGVGGFGTMLEERVQSLEERLATLAGELSHDSASPGRSARPLVQTELAVLEQRLVSLETSCTPSTTSAILDSLVAEVKAWQSRSEALLRQVASHAALLQQLNGTVAEVQGQLAEGTGSSLQGEITLLKVNLNSVSKSLTGLSDSVSQYSDAFLAANTSLDERERKVEAEVQAIQEQVSSQGSRLQAGHRQVLNLRGELEQLKAGVAKVASGLSRCQDTAQKLQHTVGHFDQRVAQVEGACRRLGLLAAGLDSLPTEPLRPREGLWSHVDQLNRTLAQHTQDIARLRDDLLDCQAQLAEQVRPGQAN.

The signal sequence occupies residues 1–22; the sequence is MGRRRLLVWLCAVAALLSGAQA. In terms of domain architecture, EMI spans 55-131; that stretch reads HKALCAYVVH…PGFTGKRCPE (77 aa). 3 disulfides stabilise this stretch: C59–C121, C86–C92, and C120–C129. N66 is a glycosylation site (N-linked (GlcNAc...) asparagine). A disordered region spans residues 132-179; the sequence is HLTDHGAASPQLEPEPQIPSGQLDPGPRPPSYSRAAPSPHGRKGPGLF. N-linked (GlcNAc...) asparagine glycosylation is present at N443. The stretch at 467 to 491 forms a coiled coil; sequence GTMLEERVQSLEERLATLAGELSHD. N562, N616, and N732 each carry an N-linked (GlcNAc...) asparagine glycan. 2 coiled-coil regions span residues 615-663 and 726-761; these read ANTS…QLKA and SHVD…EQVR.

The protein resides in the secreted. Its subcellular location is the extracellular space. It is found in the extracellular matrix. The sequence is that of EMILIN-3 (EMILIN3) from Homo sapiens (Human).